A 510-amino-acid polypeptide reads, in one-letter code: NAD(P)H-quinone oxidoreductase subunit 2, chloroplastic (510 aa).

12 helical membrane-spanning segments follow: residues L24–L44, W59–W79, I99–I119, M124–C144, L149–Y169, Y183–G203, I229–F249, W295–I315, M323–D343, Y354–L374, A395–F415, and L418–L438.

This sequence belongs to the complex I subunit 2 family. NDH is composed of at least 16 different subunits, 5 of which are encoded in the nucleus.

The protein resides in the plastid. It is found in the chloroplast thylakoid membrane. It catalyses the reaction a plastoquinone + NADH + (n+1) H(+)(in) = a plastoquinol + NAD(+) + n H(+)(out). It carries out the reaction a plastoquinone + NADPH + (n+1) H(+)(in) = a plastoquinol + NADP(+) + n H(+)(out). Its function is as follows. NDH shuttles electrons from NAD(P)H:plastoquinone, via FMN and iron-sulfur (Fe-S) centers, to quinones in the photosynthetic chain and possibly in a chloroplast respiratory chain. The immediate electron acceptor for the enzyme in this species is believed to be plastoquinone. Couples the redox reaction to proton translocation, and thus conserves the redox energy in a proton gradient. The sequence is that of NAD(P)H-quinone oxidoreductase subunit 2, chloroplastic from Ensete ventricosum (Abyssinian banana).